A 327-amino-acid chain; its full sequence is MSSDTSLSESSLLKEESGSLTKSRPPIKSNPVRENIKSFVAGGVGGVCAVFTGHPFDLIKVRCQNGQANSTVHAITNIIKEAKTQVKGTLFTNSVKGFYKGVIPPLLGVTPIFAVSFWGYDVGKKLVTFNNKQGGSNELTMGQMAAAGFISAIPTTLVTAPTERVKVVLQTSSKGSFIQAAKTIVKEGGIASLFKGSLATLARDGPGSALYFASYEISKNYLNSRQPRQDAGKDEPVNILNVCLAGGIAGMSMWLAVFPIDTIKTKLQASSTRQNMLSATKEIYLQRGGIKGFFPGLGPALLRSFPANAATFLGVEMTHSLFKKYGI.

Residues 1-11 are compositionally biased toward low complexity; it reads MSSDTSLSESS. A disordered region spans residues 1 to 29; sequence MSSDTSLSESSLLKEESGSLTKSRPPIKS. The next 6 membrane-spanning stretches (helical) occupy residues 33 to 49, 107 to 123, 141 to 162, 196 to 212, 244 to 260, and 293 to 313; these read RENI…GVCA, LGVT…YDVG, MGQM…TAPT, GSLA…ALYF, LAGG…VFPI, and FFPG…ATFL. 3 Solcar repeats span residues 33–126, 139–221, and 237–321; these read RENI…GKKL, LTMG…SKNY, and VNIL…THSL.

This sequence belongs to the mitochondrial carrier (TC 2.A.29) family.

It is found in the mitochondrion inner membrane. In terms of biological role, transports carnitine, acetylcarnitine, propionylcarnitine and to a much lower extent medium- and long-chain acylcarnitines. This is Mitochondrial carnitine carrier (CRC1) from Saccharomyces cerevisiae (strain ATCC 204508 / S288c) (Baker's yeast).